The primary structure comprises 528 residues: PH domain-containing protein DDB_G0267786 (528 aa).

The 122-residue stretch at 59-180 (SDVFSGYLVK…WIEIFKTCCR (122 aa)) folds into the PH domain.

The polypeptide is PH domain-containing protein DDB_G0267786 (Dictyostelium discoideum (Social amoeba)).